The sequence spans 425 residues: Type I restriction enzyme MjaVII specificity subunit (425 aa).

The tract at residues 9-168 (KKTEIGEIPE…KSFKIPLPPL (160 aa)) is target recognition domain 1. A central conserved region (CCR) region spans residues 169–208 (EEQKQIAKILTKIDEGIEIIEKSINKLERIKKGLMHKLLT). A coiled-coil region spans residues 169-208 (EEQKQIAKILTKIDEGIEIIEKSINKLERIKKGLMHKLLT). The tract at residues 209 to 368 (KGIGHSRFKK…TFKELSKSML (160 aa)) is target recognition domain 2. Residues 369–418 (ENFKIPLPPLEEQKQIAKILSSVDKSIELKKQKKEKLQRMKKKIMELLLT) adopt a coiled-coil conformation. A distal conserved region (DCR) region spans residues 369 to 418 (ENFKIPLPPLEEQKQIAKILSSVDKSIELKKQKKEKLQRMKKKIMELLLT).

This sequence belongs to the type-I restriction system S methylase family. As to quaternary structure, the type I restriction/modification system is composed of three polypeptides R, M and S.

In terms of biological role, the specificity (S) subunit of a type I restriction enzyme; this subunit dictates DNA sequence specificity. The M and S subunits together form a methyltransferase (MTase) that methylates A-3 on the top and bottom strands of the sequence 5'-CAAN(7)TGG-3'. In the presence of the R subunit the complex can also act as an endonuclease, binding to the same target sequence but cutting the DNA some distance from this site. Whether the DNA is cut or modified depends on the methylation state of the target sequence. When the target site is unmodified, the DNA is cut. When the target site is hemimethylated, the complex acts as a maintenance MTase modifying the DNA so that both strands become methylated. After locating a non-methylated recognition site, the enzyme complex serves as a molecular motor that translocates DNA in an ATP-dependent manner until a collision occurs that triggers cleavage. The chain is Type I restriction enzyme MjaVII specificity subunit from Methanocaldococcus jannaschii (strain ATCC 43067 / DSM 2661 / JAL-1 / JCM 10045 / NBRC 100440) (Methanococcus jannaschii).